We begin with the raw amino-acid sequence, 513 residues long: Voltage-gated potassium channel regulatory subunit KCNG1 (513 aa).

Residues 1–224 (MTLLPGDNSD…DMVERPHSGL (224 aa)) are Cytoplasmic-facing. Residues 184 to 204 (EEDDALDSEGRDSEGPAEGEG) form a disordered region. Over residues 191 to 204 (SEGRDSEGPAEGEG) the composition is skewed to basic and acidic residues. Residues 225–246 (PGKVFACLSVLFVTVTAVNLSV) form a helical membrane-spanning segment. At 247–267 (STLPSLREEEEQGHCSQMCHN) the chain is on the extracellular side. A helical membrane pass occupies residues 268 to 289 (VFIVESVCVGWFSLEFLLRLIQ). Residues 290–300 (APSKFAFLRSP) lie on the Cytoplasmic side of the membrane. The helical transmembrane segment at 301–321 (LTLIDLVAILPYYITLLVDGA) threads the bilayer. Residues 322 to 338 (AAGRRKPGAGNSYLDKV) lie on the Extracellular side of the membrane. Residues 339-359 (GLVLRVLRALRILYVMRLARH) traverse the membrane as a helical; Voltage-sensor segment. At 360 to 374 (SLGLQTLGLTARRCT) the chain is on the cytoplasmic side. A helical transmembrane segment spans residues 375 to 396 (REFGLLLLFLCVAIALFAPLLY). Residues 397 to 411 (VIENEMADSPEFTSI) are Extracellular-facing. Positions 412–423 (PACYWWAVITMT) form an intramembrane region, helical. The Selectivity filter motif lies at 424-429 (TVGYGD). An intramembrane segment occupies 424 to 431 (TVGYGDMV). Residues 432–438 (PRSTPGQ) lie on the Extracellular side of the membrane. Residues 439 to 467 (VVALSSILSGILLMAFPVTSIFHTFSRSY) form a helical membrane-spanning segment. The Cytoplasmic segment spans residues 468 to 513 (LELKQEQERVMFRRAQFLIKTKSQLSVSQDSDILFGSASSDTRDNN).

The protein belongs to the potassium channel family. G (TC 1.A.1.2) subfamily. Kv6.1/KCNG1 sub-subfamily. As to quaternary structure, heterotetramer with KCNB1. Heterotetramer with KCNB2. As to expression, expressed in brain and placenta, and at much lower levels in kidney and pancreas.

It localises to the cell membrane. In terms of biological role, regulatory alpha-subunit of the voltage-gated potassium (Kv) channel which, when coassembled with KCNB1 or KCNB2, can modulate their expression and their gating kinetics by acting on deactivation upon repolarization and inactivation during maintained depolarization. Potassium channel subunit that does not form functional channels by itself. The chain is Voltage-gated potassium channel regulatory subunit KCNG1 from Homo sapiens (Human).